A 201-amino-acid chain; its full sequence is Molybdenum cofactor guanylyltransferase (201 aa).

GTP contacts are provided by residues 15–17 (LAG), Lys-28, Asp-74, and Asp-104. Position 104 (Asp-104) interacts with Mg(2+).

The protein belongs to the MobA family. In terms of assembly, monomer. Mg(2+) serves as cofactor.

The protein resides in the cytoplasm. It catalyses the reaction Mo-molybdopterin + GTP + H(+) = Mo-molybdopterin guanine dinucleotide + diphosphate. Transfers a GMP moiety from GTP to Mo-molybdopterin (Mo-MPT) cofactor (Moco or molybdenum cofactor) to form Mo-molybdopterin guanine dinucleotide (Mo-MGD) cofactor. The sequence is that of Molybdenum cofactor guanylyltransferase from Pseudomonas syringae pv. tomato (strain ATCC BAA-871 / DC3000).